The chain runs to 26 residues: Ribulose bisphosphate carboxylase large chain (26 aa).

Residues 1-2 (MS) constitute a propeptide that is removed on maturation. P3 is subject to N-acetylproline.

It belongs to the RuBisCO large chain family. Type I subfamily. Heterohexadecamer of 8 large chains and 8 small chains.

It is found in the plastid. The protein resides in the chloroplast. The enzyme catalyses 2 (2R)-3-phosphoglycerate + 2 H(+) = D-ribulose 1,5-bisphosphate + CO2 + H2O. It catalyses the reaction D-ribulose 1,5-bisphosphate + O2 = 2-phosphoglycolate + (2R)-3-phosphoglycerate + 2 H(+). Its function is as follows. RuBisCO catalyzes two reactions: the carboxylation of D-ribulose 1,5-bisphosphate, the primary event in carbon dioxide fixation, as well as the oxidative fragmentation of the pentose substrate in the photorespiration process. Both reactions occur simultaneously and in competition at the same active site. This Vicia faba (Broad bean) protein is Ribulose bisphosphate carboxylase large chain (rbcL).